The following is a 328-amino-acid chain: DNA-directed RNA polymerase subunit alpha (328 aa).

The interval 1–235 (MQGSVTEFLK…EQLDAFVDLR (235 aa)) is alpha N-terminal domain (alpha-NTD). Residues 249-328 (FDPILLRPVD…ENWPPASLAE (80 aa)) are alpha C-terminal domain (alpha-CTD).

This sequence belongs to the RNA polymerase alpha chain family. Homodimer. The RNAP catalytic core consists of 2 alpha, 1 beta, 1 beta' and 1 omega subunit. When a sigma factor is associated with the core the holoenzyme is formed, which can initiate transcription.

It carries out the reaction RNA(n) + a ribonucleoside 5'-triphosphate = RNA(n+1) + diphosphate. Its function is as follows. DNA-dependent RNA polymerase catalyzes the transcription of DNA into RNA using the four ribonucleoside triphosphates as substrates. The protein is DNA-directed RNA polymerase subunit alpha of Pseudoalteromonas translucida (strain TAC 125).